We begin with the raw amino-acid sequence, 150 residues long: Ribonuclease H (150 aa).

In terms of domain architecture, RNase H type-1 spans 3–144 (GEDIVEIYTD…ADALARQGMA (142 aa)). Mg(2+) is bound by residues Asp12, Glu50, Asp72, and Asp136.

This sequence belongs to the RNase H family. In terms of assembly, monomer. The cofactor is Mg(2+).

The protein localises to the cytoplasm. The enzyme catalyses Endonucleolytic cleavage to 5'-phosphomonoester.. Functionally, endonuclease that specifically degrades the RNA of RNA-DNA hybrids. The protein is Ribonuclease H of Parvibaculum lavamentivorans (strain DS-1 / DSM 13023 / NCIMB 13966).